The sequence spans 807 residues: Glycerol-3-phosphate acyltransferase (807 aa).

The HXXXXD motif motif lies at Cys-308 to Met-313.

It belongs to the GPAT/DAPAT family.

It localises to the cell inner membrane. It carries out the reaction sn-glycerol 3-phosphate + an acyl-CoA = a 1-acyl-sn-glycero-3-phosphate + CoA. It participates in phospholipid metabolism; CDP-diacylglycerol biosynthesis; CDP-diacylglycerol from sn-glycerol 3-phosphate: step 1/3. This chain is Glycerol-3-phosphate acyltransferase, found in Shewanella baltica (strain OS155 / ATCC BAA-1091).